Reading from the N-terminus, the 228-residue chain is MSRAGNRGNTQARWLGIGLLGLFLLPMYLSLEVSVGKATTIYAINGSAILLPCTFSSCYGFENLYFRWSYNNSETSRILIDGIVKNDKSDPKVRVKDDDRITLEGSTKEKMNNISILLSDLEFSDTGRYTCFVRNPKEKDLNNSATIFLQVVDKLEEVDNTVTLIILAVVGGVIGLLVCILLLKKLITFILKKTREKKKECLVSSSGNDNTENGLPGSKAEEKPPTKV.

The N-terminal stretch at methionine 1–serine 30 is a signal peptide. One can recognise an Ig-like C2-type domain in the interval leucine 31–phenylalanine 148. Residues leucine 31–threonine 161 are Extracellular-facing. N-linked (GlcNAc...) asparagine glycans are attached at residues asparagine 45, asparagine 71, asparagine 113, and asparagine 142. Cysteine 53 and cysteine 131 are oxidised to a cystine. Residues valine 162–leucine 182 form a helical membrane-spanning segment. Residues leucine 183–valine 228 are Cytoplasmic-facing. A disordered region spans residues lysine 199–valine 228. Polar residues predominate over residues valine 203–asparagine 213. Residues lysine 219–valine 228 show a composition bias toward basic and acidic residues.

The protein belongs to the sodium channel auxiliary subunit SCN4B (TC 8.A.17) family. A voltage-gated sodium (Nav) channel consists of an ion-conducting pore-forming alpha subunit functional on its own that is regulated by one or more beta subunits. The beta subunit SCN4B is disulfide-linked to the pore-forming alpha subunit. Interacts with SCN1A; regulatory subunit of SCN1A/Nav1.1. Interacts with SCN2A; regulatory subunit of SCN2A/Nav1.2. In terms of processing, contains an interchain disulfide bond with SCN2A. Expressed at a high level in dorsal root ganglia, at a lower level in brain, spinal cord, skeletal muscle and heart.

It is found in the cell membrane. Regulatory subunit of multiple voltage-gated sodium (Nav) channels directly mediating the depolarization of excitable membranes. Navs, also called VGSCs (voltage-gated sodium channels) or VDSCs (voltage-dependent sodium channels), operate by switching between closed and open conformations depending on the voltage difference across the membrane. In the open conformation they allow Na(+) ions to selectively pass through the pore, along their electrochemical gradient. The influx of Na+ ions provokes membrane depolarization, initiating the propagation of electrical signals throughout cells and tissues. The accessory beta subunits participate in localization and functional modulation of the Nav channels. Modulates the activity of SCN1A/Nav1.1. Modulates the activity of SCN2A/Nav1.2. The polypeptide is Sodium channel regulatory subunit beta-4 (Rattus norvegicus (Rat)).